The following is a 222-amino-acid chain: von Willebrand factor C domain-containing protein 2-like (222 aa).

The first 21 residues, M1 to S21, serve as a signal peptide directing secretion. VWFC domains lie at K51–K110 and N114–K172.

Peripherally associated with AMPAR complex. AMPAR complex consists of an inner core made of 4 pore-forming GluA/GRIA proteins (GRIA1, GRIA2, GRIA3 and GRIA4) and 4 major auxiliary subunits arranged in a twofold symmetry. One of the two pairs of distinct binding sites is occupied either by CNIH2, CNIH3 or CACNG2, CACNG3. The other harbors CACNG2, CACNG3, CACNG4, CACNG8 or GSG1L. This inner core of AMPAR complex is complemented by outer core constituents binding directly to the GluA/GRIA proteins at sites distinct from the interaction sites of the inner core constituents. Outer core constituents include at least PRRT1, PRRT2, CKAMP44/SHISA9, FRRS1L and NRN1. The proteins of the inner and outer core serve as a platform for other, more peripherally associated AMPAR constituents, including VWC2L. Alone or in combination, these auxiliary subunits control the gating and pharmacology of the AMPAR complex and profoundly impact their biogenesis and protein processing. Predominantly expressed in the brain (at protein level). Also detected in bones, including femur and calvaria, heart, lung and kidney. Isoform 5 is predominant in lung and heart, compared to isoforms 1 and 3. Isoform 4 is expressed in femur and calvaria at higher levels than isoforms 1 and 5. Isoforms 1 and 4 are expressed at higher levels than isoform 5 in kidney and brain.

Its subcellular location is the secreted. The protein localises to the synapse. May play a role in neurogenesis. May promote matrix mineralization, but has been shown to weakly, but significantly inhibit BMP2 and BMP6 activity in a preosteoblastic cell line. This chain is von Willebrand factor C domain-containing protein 2-like (Vwc2l), found in Mus musculus (Mouse).